The following is a 449-amino-acid chain: Glycoprotein endo-alpha-1,2-mannosidase (449 aa).

Residues 1–8 (MIRFRRRT) are Cytoplasmic-facing. A helical; Signal-anchor for type II membrane protein membrane pass occupies residues 9–29 (CITLSIFIFLVCLIMAGLKHL). Residues 30-449 (RPENAAFGSP…YMKEKEHWLV (420 aa)) lie on the Lumenal side of the membrane. The catalytic stretch occupies residues 59–449 (DSENHLKGNT…YMKEKEHWLV (391 aa)).

The protein belongs to the glycosyl hydrolase 99 family.

The protein resides in the golgi apparatus membrane. The catalysed reaction is N-{alpha-Glc-(1-&gt;3)-alpha-Man-(1-&gt;2)-alpha-Man-(1-&gt;2)-alpha-Man-(1-&gt;3)-[alpha-Man-(1-&gt;2)-alpha-Man-(1-&gt;3)-[alpha-Man-(1-&gt;2)-alpha-Man-(1-&gt;6)]-alpha-Man-(1-&gt;6)]-beta-Man-(1-&gt;4)-beta-GlcNAc-(1-&gt;4)-beta-GlcNAc}-L-asparaginyl-[protein] + H2O = alpha-D-glucosyl-(1-&gt;3)-D-mannopyranose + N(4)-{alpha-D-Man-(1-&gt;2)-alpha-D-Man-(1-&gt;3)-[alpha-D-Man-(1-&gt;2)-alpha-D-Man-(1-&gt;3)-[alpha-D-Man-(1-&gt;2)-alpha-D-Man-(1-&gt;6)]-alpha-D-Man-(1-&gt;6)]-beta-D-Man-(1-&gt;4)-beta-D-GlaNAc-(1-&gt;4)-beta-D-GlcNAc}-L-asparaginyl-[protein] (N-glucan mannose isomer 8A1,2,3B1,2). The sequence is that of Glycoprotein endo-alpha-1,2-mannosidase (manea) from Xenopus laevis (African clawed frog).